The chain runs to 623 residues: Glutathione import ATP-binding protein GsiA (623 aa).

2 consecutive ABC transporter domains span residues valine 15 to leucine 269 and leucine 314 to leucine 564. Residues glycine 49 to serine 56 and glycine 357 to serine 364 each bind ATP.

It belongs to the ABC transporter superfamily. Glutathione importer (TC 3.A.1.5.11) family. As to quaternary structure, the complex is composed of two ATP-binding proteins (GsiA), two transmembrane proteins (GsiC and GsiD) and a solute-binding protein (GsiB).

It is found in the cell inner membrane. It carries out the reaction glutathione(out) + ATP + H2O = glutathione(in) + ADP + phosphate + H(+). Functionally, part of the ABC transporter complex GsiABCD involved in glutathione import. Responsible for energy coupling to the transport system. The polypeptide is Glutathione import ATP-binding protein GsiA (Escherichia coli O1:K1 / APEC).